A 322-amino-acid polypeptide reads, in one-letter code: Tropinone reductase homolog At2g29260, chloroplastic (322 aa).

The N-terminal 61 residues, 1–61 (MVLDMASHLY…YASQSSIAIT (61 aa)), are a transit peptide targeting the chloroplast. 74-98 (LVTGGTRGIGRAIVEELAGLGAEVH) lines the NADP(+) pocket. Ser-207 is a binding site for substrate.

Belongs to the short-chain dehydrogenases/reductases (SDR) family. SDR65C subfamily.

It localises to the plastid. The protein localises to the chloroplast. The polypeptide is Tropinone reductase homolog At2g29260, chloroplastic (Arabidopsis thaliana (Mouse-ear cress)).